Reading from the N-terminus, the 1132-residue chain is Eisosome protein SEG2 (1132 aa).

Polar residues predominate over residues 76–95; sequence KRTSSLPNQGHKNTSNNSAG. 2 disordered regions span residues 76 to 142 and 171 to 225; these read KRTS…GNSG and RYSL…NDYH. Basic and acidic residues predominate over residues 101-113; that stretch reads AHEDAETTFREFG. A compositionally biased stretch (polar residues) spans 115–142; the sequence is KQSSKVLNISSSTGQNSKSRTTSLGNSG. Residue serine 137 is modified to Phosphoserine. Over residues 208-225 the composition is skewed to basic and acidic residues; the sequence is GSQEKKSESGGKSKNDYH. At serine 280 the chain carries Phosphoserine. A disordered region spans residues 404-429; the sequence is PTLSEPKPAYVPPEDVEKEPSTLSNQ. A phosphoserine mark is found at serine 504 and serine 507. 2 disordered regions span residues 510–938 and 961–993; these read GGNQ…FRSM and EKKE…THTT. A Glycyl lysine isopeptide (Lys-Gly) (interchain with G-Cter in ubiquitin) cross-link involves residue lysine 526. 2 stretches are compositionally biased toward acidic residues: residues 550–561 and 595–644; these read DQEEALSDNEPE and KDDD…DDEY. At serine 556 the chain carries Phosphoserine. Polar residues-rich tracts occupy residues 688–699 and 710–735; these read SENAEVSQSGTN and YLTN…TDTT. Residue lysine 743 forms a Glycyl lysine isopeptide (Lys-Gly) (interchain with G-Cter in ubiquitin) linkage. Residues 761-773 are compositionally biased toward low complexity; it reads SSTSSSIYSIETS. 2 stretches are compositionally biased toward polar residues: residues 774-810 and 827-845; these read PNID…SSHQ and NRSC…TLSH. Low complexity predominate over residues 850-860; that stretch reads PASDSSSSPPY. The segment covering 916–930 has biased composition (basic and acidic residues); that stretch reads PPARKSSFEKERPAK. Phosphoserine is present on residues serine 980 and serine 1022.

The protein belongs to the SEG1 family. In terms of assembly, component of eisosomes, large cytoplasmic protein assemblies that localize to specialized domains termed MCCs on the plasma membrane.

Its subcellular location is the cell membrane. Its function is as follows. Likely plays only a minor role in eisosome assembly. This is Eisosome protein SEG2 (SEG2) from Saccharomyces cerevisiae (strain ATCC 204508 / S288c) (Baker's yeast).